A 218-amino-acid polypeptide reads, in one-letter code: RQNRHEASCRIVSPPVCGNELLEKGEECDCGSPRNCRDPCCDAATCKLHSWVECESGECCDQCRFIKAGNVCRPQRSECDIAESCTGQSAQCPTDDFHKNGQPCLSNYGYCYNGNCPIMHHQCYALFGSGAIVAQDGCFKFNDRGDKFFYCRKENVIITPCAQEDVKCGRLFCHTKKSECDFDYSEDPDYGMVDHGTKCADGKVCNSNRQCVDVTTAY.

Residues 14–100 enclose the Disintegrin domain; sequence PPVCGNELLE…QCPTDDFHKN (87 aa). 5 residues coordinate Ca(2+): Val-16, Leu-21, Glu-23, Glu-26, and Asp-29. Cystine bridges form between Cys-28–Cys-46, Cys-30–Cys-41, Cys-40–Cys-63, Cys-54–Cys-60, Cys-59–Cys-85, Cys-72–Cys-92, Cys-79–Cys-111, Cys-104–Cys-116, Cys-123–Cys-173, and Cys-151–Cys-161. The D/ECD-tripeptide motif lies at 78 to 80; it reads ECD.

This sequence belongs to the venom metalloproteinase (M12B) family. P-III subfamily. P-IIIa sub-subfamily. As to quaternary structure, monomer. Zn(2+) serves as cofactor. Post-translationally, glycosylated. In terms of tissue distribution, expressed by the venom gland.

Its subcellular location is the secreted. Functionally, the hemorrhagic metalloproteinase-disintegrin-like bothrojarin-1 is a potent inhibitor of collagen-induced platelet aggregation by blockage of alpha-2/beta-1 (ITGA2/ITGB1) integrin. It does not present any fibrinogen-clotting activity. This chain is Zinc metalloproteinase-disintegrin-like bothrojarin-2, found in Bothrops jararaca (Jararaca).